The chain runs to 148 residues: Large ribosomal subunit protein bL9 (148 aa).

The protein belongs to the bacterial ribosomal protein bL9 family.

Functionally, binds to the 23S rRNA. In Leptospira biflexa serovar Patoc (strain Patoc 1 / Ames), this protein is Large ribosomal subunit protein bL9.